Consider the following 307-residue polypeptide: Putative S-adenosyl-L-methionine-dependent methyltransferase Mflv_5025 (307 aa).

S-adenosyl-L-methionine-binding positions include D130 and 159 to 160; that span reads DL.

Belongs to the UPF0677 family.

Its function is as follows. Exhibits S-adenosyl-L-methionine-dependent methyltransferase activity. This chain is Putative S-adenosyl-L-methionine-dependent methyltransferase Mflv_5025, found in Mycolicibacterium gilvum (strain PYR-GCK) (Mycobacterium gilvum (strain PYR-GCK)).